A 254-amino-acid polypeptide reads, in one-letter code: 3-dehydroquinate dehydratase (254 aa).

Residues 47–49 (EFR) and Arg-83 each bind 3-dehydroquinate. The active-site Proton donor/acceptor is His-144. Lys-171 acts as the Schiff-base intermediate with substrate in catalysis. 3-dehydroquinate is bound by residues Arg-213, Ser-232, and Gln-236.

Belongs to the type-I 3-dehydroquinase family. As to quaternary structure, homodimer.

It carries out the reaction 3-dehydroquinate = 3-dehydroshikimate + H2O. It participates in metabolic intermediate biosynthesis; chorismate biosynthesis; chorismate from D-erythrose 4-phosphate and phosphoenolpyruvate: step 3/7. In terms of biological role, involved in the third step of the chorismate pathway, which leads to the biosynthesis of aromatic amino acids. Catalyzes the cis-dehydration of 3-dehydroquinate (DHQ) and introduces the first double bond of the aromatic ring to yield 3-dehydroshikimate. The sequence is that of 3-dehydroquinate dehydratase from Neisseria gonorrhoeae (strain ATCC 700825 / FA 1090).